The following is an 82-amino-acid chain: Photosystem I iron-sulfur center (82 aa).

2 consecutive 4Fe-4S ferredoxin-type domains span residues 2 to 31 (SHTV…MVPW) and 37 to 68 (GQIA…VRVY). [4Fe-4S] cluster is bound by residues cysteine 11, cysteine 14, cysteine 17, cysteine 21, cysteine 48, cysteine 51, cysteine 54, and cysteine 58.

The eukaryotic PSI reaction center is composed of at least 11 subunits. The cofactor is [4Fe-4S] cluster.

Its subcellular location is the plastid. It is found in the chloroplast thylakoid membrane. The catalysed reaction is reduced [plastocyanin] + hnu + oxidized [2Fe-2S]-[ferredoxin] = oxidized [plastocyanin] + reduced [2Fe-2S]-[ferredoxin]. Its function is as follows. Apoprotein for the two 4Fe-4S centers FA and FB of photosystem I (PSI); essential for photochemical activity. FB is the terminal electron acceptor of PSI, donating electrons to ferredoxin. The C-terminus interacts with PsaA/B/D and helps assemble the protein into the PSI complex. Required for binding of PsaD and PsaE to PSI. PSI is a plastocyanin/cytochrome c6-ferredoxin oxidoreductase, converting photonic excitation into a charge separation, which transfers an electron from the donor P700 chlorophyll pair to the spectroscopically characterized acceptors A0, A1, FX, FA and FB in turn. The sequence is that of Photosystem I iron-sulfur center from Trieres chinensis (Marine centric diatom).